We begin with the raw amino-acid sequence, 152 residues long: MSRVQLALNVDDLEAAITFYSRLFNAEPAKRKPGYANFAIADPPLKLVLLENPGTGGTLNHLGVEVGSSNTVHAEIARLTEAGLVTEKEIGTTCCFATQDKVWVTGPGGERWEVYTVLADSETFGSGPRHNDTSDGEASMCCDGQVAVGASG.

Residues 2–117 (SRVQLALNVD…GGERWEVYTV (116 aa)) form the VOC domain.

This sequence to B.subtilis YqcK.

In Mycobacterium tuberculosis (strain CDC 1551 / Oshkosh), this protein is Cadmium-induced protein CadI (cadI).